Reading from the N-terminus, the 1056-residue chain is Carbamoyl phosphate synthase large chain (1056 aa).

The tract at residues methionine 1–aspartate 399 is carboxyphosphate synthetic domain. Residues arginine 127, arginine 167, glycine 173, glycine 174, lysine 206, leucine 208, glutamate 213, glycine 239, valine 240, histidine 241, glutamine 282, and glutamate 296 each coordinate ATP. The 195-residue stretch at glutamine 131–isoleucine 325 folds into the ATP-grasp 1 domain. The Mg(2+) site is built by glutamine 282, glutamate 296, and asparagine 298. Glutamine 282, glutamate 296, and asparagine 298 together coordinate Mn(2+). The oligomerization domain stretch occupies residues isoleucine 400–isoleucine 536. Positions proline 537–asparagine 919 are carbamoyl phosphate synthetic domain. The 189-residue stretch at serine 661–leucine 849 folds into the ATP-grasp 2 domain. ATP-binding residues include arginine 697, lysine 736, isoleucine 738, glutamate 742, glycine 766, valine 767, histidine 768, serine 769, glutamine 809, and glutamate 820. 3 residues coordinate Mg(2+): glutamine 809, glutamate 820, and asparagine 822. Mn(2+) contacts are provided by glutamine 809, glutamate 820, and asparagine 822. An MGS-like domain is found at serine 915–glutamate 1043. Positions glutamate 920–arginine 1056 are allosteric domain.

The protein belongs to the CarB family. In terms of assembly, composed of two chains; the small (or glutamine) chain promotes the hydrolysis of glutamine to ammonia, which is used by the large (or ammonia) chain to synthesize carbamoyl phosphate. Tetramer of heterodimers (alpha,beta)4. Mg(2+) is required as a cofactor. Mn(2+) serves as cofactor.

It catalyses the reaction hydrogencarbonate + L-glutamine + 2 ATP + H2O = carbamoyl phosphate + L-glutamate + 2 ADP + phosphate + 2 H(+). The catalysed reaction is hydrogencarbonate + NH4(+) + 2 ATP = carbamoyl phosphate + 2 ADP + phosphate + 2 H(+). It participates in amino-acid biosynthesis; L-arginine biosynthesis; carbamoyl phosphate from bicarbonate: step 1/1. It functions in the pathway pyrimidine metabolism; UMP biosynthesis via de novo pathway; (S)-dihydroorotate from bicarbonate: step 1/3. In terms of biological role, large subunit of the glutamine-dependent carbamoyl phosphate synthetase (CPSase). CPSase catalyzes the formation of carbamoyl phosphate from the ammonia moiety of glutamine, carbonate, and phosphate donated by ATP, constituting the first step of 2 biosynthetic pathways, one leading to arginine and/or urea and the other to pyrimidine nucleotides. The large subunit (synthetase) binds the substrates ammonia (free or transferred from glutamine from the small subunit), hydrogencarbonate and ATP and carries out an ATP-coupled ligase reaction, activating hydrogencarbonate by forming carboxy phosphate which reacts with ammonia to form carbamoyl phosphate. The polypeptide is Carbamoyl phosphate synthase large chain (Pyrococcus furiosus (strain ATCC 43587 / DSM 3638 / JCM 8422 / Vc1)).